The following is an 89-amino-acid chain: Otospiralin (89 aa).

Positions 1–21 (MQPCVLWWLALGLLLGIPAGA) are cleaved as a signal peptide.

It belongs to the otospiralin family. In terms of tissue distribution, ear specific. Expressed in the cochlea and vestibule, but not in the cochlear nerve, cochlear nucleus, spinal chord, muscle, cerebral cortex, cerebellum, diencephalon and olfactory bulb. In the cochlea, expressed in fibrocytes of the spiral limbus, spiral ligament and suprastrial zone. In the vestibule, expressed in cells located to the stroma below the macular and crista sensory epithelia and in the subepithelial layer of the walls of semicircular canals and maculae.

The protein localises to the secreted. Its function is as follows. May be essential for the survival of the neurosensory epithelium of the inner ear. The sequence is that of Otospiralin (Otos) from Rattus norvegicus (Rat).